A 160-amino-acid polypeptide reads, in one-letter code: Large ribosomal subunit protein eL29 (160 aa).

Residues 1–26 (MAKSKNHTTHNQSRKWHRNGIKKPRS) show a composition bias toward basic residues. Disordered stretches follow at residues 1 to 34 (MAKSKNHTTHNQSRKWHRNGIKKPRSQRYESLKG) and 115 to 160 (RLCQ…VKAP). N6-methyllysine is present on Lys5. At Ser31 the chain carries Phosphoserine. Lys33 is modified (N6-acetyllysine). A compositionally biased stretch (low complexity) spans 126–160 (KAGAKAPAKAQASAPAQAPKGAQAPKGAQAPVKAP). Repeat copies occupy residues 127 to 134 (AGAKAPAK) and 135 to 142 (AQASAPAQ). A 2 X 8 AA tandem repeats of A-X-A-K-A-P-A-[KQ] region spans residues 127-142 (AGAKAPAKAQASAPAQ). At Ser138 the chain carries Phosphoserine. Lys145 bears the N6-acetyllysine mark.

Belongs to the eukaryotic ribosomal protein eL29 family. In terms of assembly, component of the large ribosomal subunit.

The protein resides in the cytoplasm. Component of the large ribosomal subunit. The ribosome is a large ribonucleoprotein complex responsible for the synthesis of proteins in the cell. The sequence is that of Large ribosomal subunit protein eL29 (Rpl29) from Mus musculus (Mouse).